Consider the following 344-residue polypeptide: GTP 3',8-cyclase (344 aa).

A Radical SAM core domain is found at 19 to 245; the sequence is PFGRAVTYLR…DIPYRTGGPA (227 aa). Residue R28 coordinates GTP. Residues C35 and C39 each contribute to the [4Fe-4S] cluster site. Y41 serves as a coordination point for S-adenosyl-L-methionine. Residue C42 participates in [4Fe-4S] cluster binding. Residue R77 participates in GTP binding. Residue G81 participates in S-adenosyl-L-methionine binding. T111 contacts GTP. Position 135 (S135) interacts with S-adenosyl-L-methionine. K171 contacts GTP. S-adenosyl-L-methionine is bound at residue M205. C268 and C271 together coordinate [4Fe-4S] cluster. 273–275 is a GTP binding site; it reads RVR. [4Fe-4S] cluster is bound at residue C285.

This sequence belongs to the radical SAM superfamily. MoaA family. As to quaternary structure, monomer and homodimer. [4Fe-4S] cluster serves as cofactor.

The enzyme catalyses GTP + AH2 + S-adenosyl-L-methionine = (8S)-3',8-cyclo-7,8-dihydroguanosine 5'-triphosphate + 5'-deoxyadenosine + L-methionine + A + H(+). The protein operates within cofactor biosynthesis; molybdopterin biosynthesis. Functionally, catalyzes the cyclization of GTP to (8S)-3',8-cyclo-7,8-dihydroguanosine 5'-triphosphate. This is GTP 3',8-cyclase from Brucella melitensis biotype 2 (strain ATCC 23457).